The chain runs to 1531 residues: Myosin-17 (1531 aa).

In terms of domain architecture, Myosin N-terminal SH3-like spans 8–57 (IVGSHVWIEDPGAAWIDGEVVKINGEEVHAHTTNGKTVVANIANVFPKDT). Positions 62 to 732 (GGVDDMTKLS…QMAELDARRA (671 aa)) constitute a Myosin motor domain. Residues 156–163 (GESGAGKT) and 209–217 (NNNSSRFGK) each bind ATP. Actin-binding regions lie at residues 495 to 529 (LIEK…YQTF), 531 to 554 (NYKR…AGEV), 589 to 613 (FPRL…KLQL), and 613 to 635 (LQSL…KPNN). IQ domains are found at residues 758-787 (LRGA…QAAA), 783-812 (RQAA…STIT), 806-835 (IRHS…MKAA), 831-860 (QMKA…AALS), and 854-883 (LQKA…AARD). Residues 884-1056 (TGALREAKDK…VLRQQALAIS (173 aa)) are a coiled coil. Positions 1071–1090 (LPRTPENGNYLNGGTKTTPD) are disordered. Positions 1076–1090 (ENGNYLNGGTKTTPD) are enriched in polar residues. A Dilute domain is found at 1159 to 1470 (DRIIQTIATA…IANMRVMMTE (312 aa)). A Phosphoserine modification is found at Ser-1517.

Belongs to the TRAFAC class myosin-kinesin ATPase superfamily. Myosin family. Plant myosin class XI subfamily. As to quaternary structure, homodimer. Interacts with MYOB1, MYOB2 and MYOB3. Interacts with PHOX1 and PHOX2. As to expression, expressed ubiquitously.

The protein localises to the cytoplasm. Its function is as follows. Myosin heavy chain that is required for the cell cycle-regulated transport of various organelles and proteins for their segregation. Functions by binding with its tail domain to receptor proteins on organelles and exerting force with its N-terminal motor domain against actin filaments, thereby transporting its cargo along polarized actin cables. Involved in the tip growth of root hair cells and in the elongation of trichome stalk and branches. Plays a major role in trafficking of Golgi stacks, mitochondria and peroxisomes during root hair development. Acts as the primary contributor to ER streaming with a major role in the movement of Golgi bodies. Required for development of pavement cells, trichomes, and stigmatic papillae. Together with XI-F, required for the regulation of organ bending, such as gravitropic root bending. The sequence is that of Myosin-17 from Arabidopsis thaliana (Mouse-ear cress).